A 187-amino-acid chain; its full sequence is Probable nicotinate-nucleotide adenylyltransferase (187 aa).

It belongs to the NadD family.

It catalyses the reaction nicotinate beta-D-ribonucleotide + ATP + H(+) = deamido-NAD(+) + diphosphate. It functions in the pathway cofactor biosynthesis; NAD(+) biosynthesis; deamido-NAD(+) from nicotinate D-ribonucleotide: step 1/1. In terms of biological role, catalyzes the reversible adenylation of nicotinate mononucleotide (NaMN) to nicotinic acid adenine dinucleotide (NaAD). This chain is Probable nicotinate-nucleotide adenylyltransferase, found in Anaeromyxobacter dehalogenans (strain 2CP-1 / ATCC BAA-258).